The following is a 318-amino-acid chain: D-alanine--D-alanine ligase (318 aa).

One can recognise an ATP-grasp domain in the interval 116–315 (KQVWQSLGLP…FEQLSLAVLA (200 aa)). 146-201 (MSRLGDLVMVKPAQEGSSIGMAKVSNAQQLAAAIQQAFEYDDKVLLEQFIQGSEYT) provides a ligand contact to ATP. Positions 269, 282, and 284 each coordinate Mg(2+).

Belongs to the D-alanine--D-alanine ligase family. Mg(2+) serves as cofactor. Requires Mn(2+) as cofactor.

It localises to the cytoplasm. The catalysed reaction is 2 D-alanine + ATP = D-alanyl-D-alanine + ADP + phosphate + H(+). Its pathway is cell wall biogenesis; peptidoglycan biosynthesis. Functionally, cell wall formation. The polypeptide is D-alanine--D-alanine ligase (Pseudoalteromonas atlantica (strain T6c / ATCC BAA-1087)).